The sequence spans 141 residues: Eukaryotic translation initiation factor 1A (141 aa).

The segment covering 1-15 (MPKNKGKGGKNRRRG) has biased composition (basic residues). The interval 1 to 28 (MPKNKGKGGKNRRRGKNENEQKRELQFK) is disordered. The segment covering 16 to 28 (KNENEQKRELQFK) has biased composition (basic and acidic residues). Positions 21-95 (QKRELQFKEE…DKADVILRYN (75 aa)) constitute an S1-like domain.

The protein belongs to the eIF-1A family.

In terms of biological role, seems to be required for maximal rate of protein biosynthesis. Enhances ribosome dissociation into subunits and stabilizes the binding of the initiator Met-tRNA(I) to 40 S ribosomal subunits. The sequence is that of Eukaryotic translation initiation factor 1A (eif1a) from Dictyostelium discoideum (Social amoeba).